Here is a 276-residue protein sequence, read N- to C-terminus: Shikimate dehydrogenase (NADP(+)) (276 aa).

Shikimate is bound by residues 20 to 22 (SRS) and threonine 67. The active-site Proton acceptor is the lysine 71. Aspartate 83 contacts NADP(+). 2 residues coordinate shikimate: asparagine 92 and aspartate 107. NADP(+) is bound by residues 131–135 (GAGGA) and isoleucine 217. Position 219 (tyrosine 219) interacts with shikimate. NADP(+) is bound at residue glycine 240.

The protein belongs to the shikimate dehydrogenase family. In terms of assembly, homodimer.

It carries out the reaction shikimate + NADP(+) = 3-dehydroshikimate + NADPH + H(+). The protein operates within metabolic intermediate biosynthesis; chorismate biosynthesis; chorismate from D-erythrose 4-phosphate and phosphoenolpyruvate: step 4/7. In terms of biological role, involved in the biosynthesis of the chorismate, which leads to the biosynthesis of aromatic amino acids. Catalyzes the reversible NADPH linked reduction of 3-dehydroshikimate (DHSA) to yield shikimate (SA). The protein is Shikimate dehydrogenase (NADP(+)) of Acidiphilium cryptum (strain JF-5).